Reading from the N-terminus, the 372-residue chain is 4-hydroxy-3-methylbut-2-en-1-yl diphosphate synthase (flavodoxin) (372 aa).

Residues Cys-270, Cys-273, Cys-305, and Glu-312 each contribute to the [4Fe-4S] cluster site.

It belongs to the IspG family. The cofactor is [4Fe-4S] cluster.

It catalyses the reaction (2E)-4-hydroxy-3-methylbut-2-enyl diphosphate + oxidized [flavodoxin] + H2O + 2 H(+) = 2-C-methyl-D-erythritol 2,4-cyclic diphosphate + reduced [flavodoxin]. Its pathway is isoprenoid biosynthesis; isopentenyl diphosphate biosynthesis via DXP pathway; isopentenyl diphosphate from 1-deoxy-D-xylulose 5-phosphate: step 5/6. Its function is as follows. Converts 2C-methyl-D-erythritol 2,4-cyclodiphosphate (ME-2,4cPP) into 1-hydroxy-2-methyl-2-(E)-butenyl 4-diphosphate. This is 4-hydroxy-3-methylbut-2-en-1-yl diphosphate synthase (flavodoxin) from Shewanella amazonensis (strain ATCC BAA-1098 / SB2B).